A 119-amino-acid polypeptide reads, in one-letter code: Holo-[acyl-carrier-protein] synthase (119 aa).

Mg(2+) is bound by residues aspartate 8 and glutamate 50.

Belongs to the P-Pant transferase superfamily. AcpS family. Mg(2+) is required as a cofactor.

It localises to the cytoplasm. It carries out the reaction apo-[ACP] + CoA = holo-[ACP] + adenosine 3',5'-bisphosphate + H(+). In terms of biological role, transfers the 4'-phosphopantetheine moiety from coenzyme A to a Ser of acyl-carrier-protein. This is Holo-[acyl-carrier-protein] synthase from Clavibacter michiganensis subsp. michiganensis (strain NCPPB 382).